We begin with the raw amino-acid sequence, 240 residues long: MQKTFESKTATSKAVVVFSGGQDSTTCLIQALTQYDEVHGITFDYGQRHREEIEVAKSLAKRLKITSHKVMDVTLLNELAISALTRDAIPVSHELMENGLPNTFVPGRNILFLTLAGIYAYQLGAEAIITGVCETDFSGYPDCRNDFVKAMESALVQGMDKQLKIITPLMWLNKAQTWALADKYQQLDLVRHHTLTCYNGVIGDGCGDCPACHLRKRGLDDYLQNKAAVMAELDASEPKA.

ATP is bound at residue 18–28; sequence FSGGQDSTTCL. Residues C197, C206, C209, and C212 each coordinate Zn(2+).

It belongs to the QueC family. Requires Zn(2+) as cofactor.

The enzyme catalyses 7-carboxy-7-deazaguanine + NH4(+) + ATP = 7-cyano-7-deazaguanine + ADP + phosphate + H2O + H(+). Its pathway is purine metabolism; 7-cyano-7-deazaguanine biosynthesis. Functionally, catalyzes the ATP-dependent conversion of 7-carboxy-7-deazaguanine (CDG) to 7-cyano-7-deazaguanine (preQ(0)). The protein is 7-cyano-7-deazaguanine synthase of Shewanella putrefaciens (strain CN-32 / ATCC BAA-453).